Consider the following 675-residue polypeptide: Electrogenic aspartate/glutamate antiporter SLC25A13, mitochondrial (675 aa).

Alanine 2 bears the N-acetylalanine mark. Positions 2 to 295 (AAAKVALTKR…TLADIERIAP (294 aa)) are regulatory N-terminal domain. At 2–331 (AAAKVALTKR…LLQVAESAYR (330 aa)) the chain is on the mitochondrial intermembrane side. 4 consecutive EF-hand domains span residues 51-86 (SQPN…SVLC), 87-122 (APDA…TTIH), 125-157 (IPFN…FLLE), and 158-193 (IQLE…IRPH). Positions 66, 68, 70, 72, and 77 each coordinate Ca(2+). A linker loop domain region spans residues 296 to 311 (LEEGTLPFNLAEAQRQ). Residues 321 to 612 (VLLQVAESAY…LQRWFYIDFG (292 aa)) are carrier domain. Solcar repeat units lie at residues 326–418 (AESA…VRDK), 426–510 (VPLA…VKAS), and 518–606 (VSPG…LQRW). The helical transmembrane segment at 332–349 (FGLGSVAGAVGATAVYPI) threads the bilayer. Topologically, residues 350–392 (DLVKTRMQNQRSTGSFVGELMYKNSFDCFKKVLRYEGFFGLYR) are mitochondrial matrix. Lysine 353 and lysine 372 each carry N6-acetyllysine. A helical membrane pass occupies residues 393-412 (GLLPQLLGVAPEKAIKLTVN). The Mitochondrial intermembrane segment spans residues 413-435 (DFVRDKFMHKDGSVPLAAEILAG). Residues 436-449 (GCAGGSQVIFTNPL) traverse the membrane as a helical segment. The Mitochondrial matrix portion of the chain corresponds to 450 to 484 (EIVKIRLQVAGEITTGPRVSALSVVRDLGFFGIYK). Lysine 453 carries the N6-methyllysine modification. Lysine 484 bears the N6-acetyllysine; alternate mark. Position 484 is an N6-succinyllysine; alternate (lysine 484). The chain crosses the membrane as a helical span at residues 485–504 (GAKACFLRDIPFSAIYFPCY). The Mitochondrial intermembrane segment spans residues 505–523 (AHVKASFANEDGQVSPGSL). The helical transmembrane segment at 524 to 541 (LLAGAIAGMPAASLVTPA) threads the bilayer. Topologically, residues 542 to 580 (DVIKTRLQVAARAGQTTYSGVIDCFRKILREEGPKALWK) are mitochondrial matrix. Lysine 580 carries the post-translational modification N6-succinyllysine. The chain crosses the membrane as a helical span at residues 581 to 600 (GAGARVFRSSPQFGVTLLTY). Over 601-675 (ELLQRWFYID…STSKAIGGGP (75 aa)) the chain is Mitochondrial intermembrane. Positions 613-675 (GVKPMGSEPV…STSKAIGGGP (63 aa)) are C-terminal domain. Residue lysine 662 is modified to N6-acetyllysine. Serine 666 is subject to Phosphoserine.

This sequence belongs to the mitochondrial carrier (TC 2.A.29) family. As to quaternary structure, homodimer (via N-terminus). In terms of tissue distribution, high levels in liver and low levels in kidney, pancreas, placenta, heart and brain.

Its subcellular location is the mitochondrion inner membrane. It catalyses the reaction L-aspartate(in) + L-glutamate(out) + H(+)(out) = L-aspartate(out) + L-glutamate(in) + H(+)(in). The enzyme catalyses 3-sulfino-L-alanine(out) + L-glutamate(in) + H(+)(in) = 3-sulfino-L-alanine(in) + L-glutamate(out) + H(+)(out). The catalysed reaction is 3-sulfino-L-alanine(out) + L-aspartate(in) = 3-sulfino-L-alanine(in) + L-aspartate(out). With respect to regulation, activated by calcium-binding in the mitochondrial intermembrane space. Inhibited by pyridoxal 5'-phosphate, bathophenathroline, mercurials, diethyl pyrocarbonate and N-ethylmaleimide. Functionally, mitochondrial electrogenic aspartate/glutamate antiporter that favors efflux of aspartate and entry of glutamate and proton within the mitochondria as part of the malate-aspartate shuttle. Also mediates the uptake of L-cysteinesulfinate (3-sulfino-L-alanine) by mitochondria in exchange of L-glutamate and proton. Can also exchange L-cysteinesulfinate with aspartate in their anionic form without any proton translocation. Lacks transport activity towards gamma-aminobutyric acid (GABA). The sequence is that of Electrogenic aspartate/glutamate antiporter SLC25A13, mitochondrial from Homo sapiens (Human).